A 943-amino-acid polypeptide reads, in one-letter code: Isoleucine--tRNA ligase (943 aa).

The 'HIGH' region signature appears at 59–69 (PYANGQIHLGH). L-isoleucyl-5'-AMP is bound at residue Glu577. The 'KMSKS' region signature appears at 618 to 622 (KMSKS). Lys621 serves as a coordination point for ATP. The Zn(2+) site is built by Cys906, Cys909, Cys926, and Cys929.

This sequence belongs to the class-I aminoacyl-tRNA synthetase family. IleS type 1 subfamily. In terms of assembly, monomer. Zn(2+) is required as a cofactor.

The protein localises to the cytoplasm. The catalysed reaction is tRNA(Ile) + L-isoleucine + ATP = L-isoleucyl-tRNA(Ile) + AMP + diphosphate. Catalyzes the attachment of isoleucine to tRNA(Ile). As IleRS can inadvertently accommodate and process structurally similar amino acids such as valine, to avoid such errors it has two additional distinct tRNA(Ile)-dependent editing activities. One activity is designated as 'pretransfer' editing and involves the hydrolysis of activated Val-AMP. The other activity is designated 'posttransfer' editing and involves deacylation of mischarged Val-tRNA(Ile). In Xanthomonas campestris pv. campestris (strain B100), this protein is Isoleucine--tRNA ligase.